A 300-amino-acid chain; its full sequence is NAD kinase (300 aa).

Asp-75 (proton acceptor) is an active-site residue. NAD(+) is bound by residues 75–76, 149–150, Arg-177, Asp-179, 190–195, Ala-214, and Gln-248; these read DG, ND, and TAYALS.

This sequence belongs to the NAD kinase family. A divalent metal cation is required as a cofactor.

The protein localises to the cytoplasm. It carries out the reaction NAD(+) + ATP = ADP + NADP(+) + H(+). Functionally, involved in the regulation of the intracellular balance of NAD and NADP, and is a key enzyme in the biosynthesis of NADP. Catalyzes specifically the phosphorylation on 2'-hydroxyl of the adenosine moiety of NAD to yield NADP. This chain is NAD kinase, found in Paraburkholderia phymatum (strain DSM 17167 / CIP 108236 / LMG 21445 / STM815) (Burkholderia phymatum).